We begin with the raw amino-acid sequence, 323 residues long: Probable oxidoreductase patJ (323 aa).

Residues 291–323 (DQSANGVNGHATGVEAKKKQLGDMTRRRSGAQE) form a disordered region. Residues 305-316 (EAKKKQLGDMTR) are compositionally biased toward basic and acidic residues.

The protein belongs to the oxidoreductase OpS7 family.

It localises to the vacuole lumen. Its subcellular location is the cytoplasmic vesicle lumen. The protein operates within mycotoxin biosynthesis; patulin biosynthesis. In terms of biological role, probable oxidoreductase; part of the gene cluster that mediates the biosynthesis of patulin, an acetate-derived tetraketide mycotoxin produced by several fungal species that shows antimicrobial properties against several bacteria. PatJ acts with patO in the vacuole to convert gentisyl alcohol to isoepoxydon. The pathway begins with the synthesis of 6-methylsalicylic acid by the polyketide synthase (PKS) patK via condensation of acetate and malonate units. The 6-methylsalicylic acid decarboxylase patG then catalyzes the decarboxylation of 6-methylsalicylic acid to yield m-cresol (also known as 3-methylphenol). These first reactions occur in the cytosol. The intermediate m-cresol is then transported into the endoplasmic reticulum where the cytochrome P450 monooxygenase patH converts it to m-hydroxybenzyl alcohol, which is further converted to gentisyl alcohol by the cytochrome P450 monooxygenase patI. The oxidoreductases patJ and patO further convert gentisyl alcohol to isoepoxydon in the vacuole. PatN catalyzes then the transformation of isoepoxydon into phyllostine. The cluster protein patF is responsible for the conversion from phyllostine to neopatulin whereas the alcohol dehydrogenase patD converts neopatulin to E-ascladiol. The steps between isoepoxydon and E-ascladiol occur in the cytosol, and E-ascladiol is probably secreted to the extracellular space by one of the cluster-specific transporters patC or patM. Finally, the secreted patulin synthase patE catalyzes the conversion of E-ascladiol to patulin. In Aspergillus clavatus (strain ATCC 1007 / CBS 513.65 / DSM 816 / NCTC 3887 / NRRL 1 / QM 1276 / 107), this protein is Probable oxidoreductase patJ.